The primary structure comprises 586 residues: Putative butyrophilin subfamily 2 member A3 (586 aa).

The N-terminal stretch at 1-27 (MEPAAALHFSRPASLLLLLSLCALVSA) is a signal peptide. The region spanning 28–139 (QVTVVGPTDP…SCNEAILHLV (112 aa)) is the Ig-like V-type domain. The Extracellular portion of the chain corresponds to 28 to 246 (QVTVVGPTDP…SFMPSRSPCV (219 aa)). Asn-45, Asn-112, Asn-214, and Asn-220 each carry an N-linked (GlcNAc...) asparagine glycan. A disulfide bridge links Cys-50 with Cys-123. A helical membrane pass occupies residues 247-267 (VILPVIMIILMIPIAICIYWI). Residues 268-586 (NNLQKEKKDS…VPQLPARKKV (319 aa)) lie on the Cytoplasmic side of the membrane. One can recognise a B30.2/SPRY domain in the interval 281–474 (TFNLCLSLAG…ILICSAFTGA (194 aa)).

Belongs to the immunoglobulin superfamily. BTN/MOG family.

It localises to the membrane. The chain is Putative butyrophilin subfamily 2 member A3 (BTN2A3P) from Homo sapiens (Human).